Consider the following 812-residue polypeptide: Eukaryotic translation initiation factor 3 subunit C (812 aa).

The tract at residues 1-105 (MSRFFSRGYH…SDESDDEGKK (105 aa)) is disordered. Acidic residues-rich tracts occupy residues 17–40 (SEDE…EVVS) and 48–59 (SESESAESDDDS). Residues 607–783 (FHQHINLDLI…EMLIFDKGDE (177 aa)) enclose the PCI domain.

Belongs to the eIF-3 subunit C family. Component of the eukaryotic translation initiation factor 3 (eIF-3) complex.

It localises to the cytoplasm. In terms of biological role, component of the eukaryotic translation initiation factor 3 (eIF-3) complex, which is involved in protein synthesis of a specialized repertoire of mRNAs and, together with other initiation factors, stimulates binding of mRNA and methionyl-tRNAi to the 40S ribosome. The eIF-3 complex specifically targets and initiates translation of a subset of mRNAs involved in cell proliferation. The sequence is that of Eukaryotic translation initiation factor 3 subunit C from Eremothecium gossypii (strain ATCC 10895 / CBS 109.51 / FGSC 9923 / NRRL Y-1056) (Yeast).